Here is an 83-residue protein sequence, read N- to C-terminus: U25-theraphotoxin-Cg1a (83 aa).

Positions 1 to 23 are cleaved as a signal peptide; sequence MRFHTLLFLSFLLLVSCALICTA. The propeptide occupies 24 to 48; that stretch reads QHPGLEKSGMFHENVGKGQHIEEKR. 3 disulfide bridges follow: Cys50–Cys66, Cys57–Cys71, and Cys65–Cys81.

Belongs to the neurotoxin 07 (Beta/delta-agtx) family. 03 (aga-4) subfamily. JZTX sub-subfamily. Expressed by the venom gland.

It is found in the secreted. Its function is as follows. Inhibits TTX-sensitive sodium currents in rat dorsal root ganglion (DRG) neurons. The polypeptide is U25-theraphotoxin-Cg1a (Chilobrachys guangxiensis (Chinese earth tiger tarantula)).